Reading from the N-terminus, the 689-residue chain is Beta-galactosidase BbgII (689 aa).

2 residues coordinate substrate: R122 and N160. E161 functions as the Proton donor in the catalytic mechanism. The active-site Nucleophile is E320. Residues W328 and 368–371 (EKWH) each bind substrate.

The protein belongs to the glycosyl hydrolase 42 family.

The enzyme catalyses Hydrolysis of terminal non-reducing beta-D-galactose residues in beta-D-galactosides.. In Bifidobacterium bifidum (strain DSM 20082 / JCM 1254 / BCRC 11844 / KCTC 3440 / E319f (Variant a)), this protein is Beta-galactosidase BbgII.